The sequence spans 305 residues: Phosphatidate cytidylyltransferase (305 aa).

A run of 7 helical transmembrane segments spans residues 24-44, 97-117, 124-144, 151-171, 202-222, 232-252, and 277-297; these read LLVFLVILLCTSLYPSSAFIV, PEHVDLIPWFFLFFWTVHLVF, LGPIGSTGLALFCMLYVSVPI, LYGFVHTDTPFIGIWWAIFLI, TVVGFVAGCIASILVSLIFYS, IAMPWILVALGIILGISGFFG, and MLDVLDSLLLSTPIVYAILLI.

This sequence belongs to the CDS family.

It is found in the cell membrane. It carries out the reaction a 1,2-diacyl-sn-glycero-3-phosphate + CTP + H(+) = a CDP-1,2-diacyl-sn-glycerol + diphosphate. Its pathway is phospholipid metabolism; CDP-diacylglycerol biosynthesis; CDP-diacylglycerol from sn-glycerol 3-phosphate: step 3/3. The protein is Phosphatidate cytidylyltransferase (cdsA) of Chlamydia muridarum (strain MoPn / Nigg).